A 223-amino-acid chain; its full sequence is Thiamine-phosphate synthase (223 aa).

Residues glutamine 42 to lysine 46 and asparagine 83 contribute to the 4-amino-2-methyl-5-(diphosphooxymethyl)pyrimidine site. Residues aspartate 84 and aspartate 103 each contribute to the Mg(2+) site. Serine 122 is a 4-amino-2-methyl-5-(diphosphooxymethyl)pyrimidine binding site. Position 148–150 (threonine 148–threonine 150) interacts with 2-[(2R,5Z)-2-carboxy-4-methylthiazol-5(2H)-ylidene]ethyl phosphate. Lysine 151 provides a ligand contact to 4-amino-2-methyl-5-(diphosphooxymethyl)pyrimidine. Glycine 179 is a 2-[(2R,5Z)-2-carboxy-4-methylthiazol-5(2H)-ylidene]ethyl phosphate binding site.

It belongs to the thiamine-phosphate synthase family. Mg(2+) is required as a cofactor.

The enzyme catalyses 2-[(2R,5Z)-2-carboxy-4-methylthiazol-5(2H)-ylidene]ethyl phosphate + 4-amino-2-methyl-5-(diphosphooxymethyl)pyrimidine + 2 H(+) = thiamine phosphate + CO2 + diphosphate. The catalysed reaction is 2-(2-carboxy-4-methylthiazol-5-yl)ethyl phosphate + 4-amino-2-methyl-5-(diphosphooxymethyl)pyrimidine + 2 H(+) = thiamine phosphate + CO2 + diphosphate. It catalyses the reaction 4-methyl-5-(2-phosphooxyethyl)-thiazole + 4-amino-2-methyl-5-(diphosphooxymethyl)pyrimidine + H(+) = thiamine phosphate + diphosphate. The protein operates within cofactor biosynthesis; thiamine diphosphate biosynthesis; thiamine phosphate from 4-amino-2-methyl-5-diphosphomethylpyrimidine and 4-methyl-5-(2-phosphoethyl)-thiazole: step 1/1. Its function is as follows. Condenses 4-methyl-5-(beta-hydroxyethyl)thiazole monophosphate (THZ-P) and 2-methyl-4-amino-5-hydroxymethyl pyrimidine pyrophosphate (HMP-PP) to form thiamine monophosphate (TMP). The polypeptide is Thiamine-phosphate synthase (Mycobacterium avium (strain 104)).